The chain runs to 271 residues: 5-deoxy-glucuronate isomerase (271 aa).

The protein belongs to the isomerase IolB family.

The catalysed reaction is 5-deoxy-D-glucuronate = 5-dehydro-2-deoxy-D-gluconate. The protein operates within polyol metabolism; myo-inositol degradation into acetyl-CoA; acetyl-CoA from myo-inositol: step 4/7. Its function is as follows. Involved in the isomerization of 5-deoxy-glucuronate (5DG) to 5-dehydro-2-deoxy-D-gluconate (DKG or 2-deoxy-5-keto-D-gluconate). This is 5-deoxy-glucuronate isomerase from Bacillus subtilis subsp. natto.